Reading from the N-terminus, the 98-residue chain is Beta-2-microglobulin (98 aa).

Residues 4–92 form the Ig-like C1-type domain; it reads PKVQVYSRFP…HETLKEPQVY (89 aa). C24 and C79 are oxidised to a cystine.

This sequence belongs to the beta-2-microglobulin family. As to quaternary structure, heterodimer of an alpha chain and a beta chain. Beta-2-microglobulin is the beta-chain of major histocompatibility complex class I molecules.

It localises to the secreted. Component of the class I major histocompatibility complex (MHC). Involved in the presentation of peptide antigens to the immune system. The protein is Beta-2-microglobulin (B2M) of Meleagris gallopavo (Wild turkey).